A 475-amino-acid chain; its full sequence is E3 ubiquitin-protein ligase TRIM62 (475 aa).

The RING-type zinc finger occupies 11–54 (CSICLSIYQDPVSLGCEHYFCRRCITEHWVRQEAQGARDCPECR). A B box-type zinc finger spans residues 88 to 128 (RAARPCQAHDKVKLFCLTDRALLCFFCDEPALHEQHQVTGI). Zn(2+)-binding residues include Cys-93, His-96, Cys-114, and His-120. Positions 127–241 (GIDDAFDELQ…LQERLAETDR (115 aa)) form a coiled coil. The 199-residue stretch at 277–475 (PLQYTIWKSL…QPLRINTVRI (199 aa)) folds into the B30.2/SPRY domain.

This sequence belongs to the TRIM/RBCC family. As to quaternary structure, interacts with the ubiquitin-conjugating enzyme, UBE2D2. Post-translationally, polyubiquitinated, autoubiquitinated in the presence of UBE2D2.

The protein resides in the cytoplasm. It catalyses the reaction S-ubiquitinyl-[E2 ubiquitin-conjugating enzyme]-L-cysteine + [acceptor protein]-L-lysine = [E2 ubiquitin-conjugating enzyme]-L-cysteine + N(6)-ubiquitinyl-[acceptor protein]-L-lysine.. It participates in protein modification; protein ubiquitination. E3 ubiquitin ligase that plays a role in antifungal immunity by mediating 'Lys-27'-linked ubiquitination of CARD9 downstream of C-type lectin receptors; leading to CARD9 activation, followed by activation of NF-kappa-B and MAP kinase p38 pathways. E3 ubiquitin ligase activity is dependent on E2 ubiquitin-conjugating enzyme UBE2D2. This chain is E3 ubiquitin-protein ligase TRIM62, found in Homo sapiens (Human).